A 258-amino-acid chain; its full sequence is Acyl-[acyl-carrier-protein]--UDP-N-acetylglucosamine O-acyltransferase (258 aa).

Belongs to the transferase hexapeptide repeat family. LpxA subfamily. As to quaternary structure, homotrimer.

It is found in the cytoplasm. The enzyme catalyses a (3R)-hydroxyacyl-[ACP] + UDP-N-acetyl-alpha-D-glucosamine = a UDP-3-O-[(3R)-3-hydroxyacyl]-N-acetyl-alpha-D-glucosamine + holo-[ACP]. The protein operates within glycolipid biosynthesis; lipid IV(A) biosynthesis; lipid IV(A) from (3R)-3-hydroxytetradecanoyl-[acyl-carrier-protein] and UDP-N-acetyl-alpha-D-glucosamine: step 1/6. Its function is as follows. Involved in the biosynthesis of lipid A, a phosphorylated glycolipid that anchors the lipopolysaccharide to the outer membrane of the cell. In Neisseria gonorrhoeae (strain ATCC 700825 / FA 1090), this protein is Acyl-[acyl-carrier-protein]--UDP-N-acetylglucosamine O-acyltransferase.